Consider the following 238-residue polypeptide: Probable xyloglucan-specific endo-beta-1,4-glucanase A (238 aa).

Positions 1–18 are cleaved as a signal peptide; it reads MKLSLSVALSLAAATAQA. 2 N-linked (GlcNAc...) asparagine glycosylation sites follow: Asn-106 and Asn-171.

It belongs to the glycosyl hydrolase 12 (cellulase H) family.

Its subcellular location is the secreted. The catalysed reaction is xyloglucan + H2O = xyloglucan oligosaccharides.. Functionally, catalyzes endohydrolysis of 1,4-beta-D-glucosidic linkages in xyloglucan with retention of the beta-configuration of the glycosyl residues. Specific for xyloglucan and does not hydrolyze other cell wall components. The sequence is that of Probable xyloglucan-specific endo-beta-1,4-glucanase A (xgeA) from Aspergillus fumigatus (strain CBS 144.89 / FGSC A1163 / CEA10) (Neosartorya fumigata).